The primary structure comprises 352 residues: Protein RecA (352 aa).

An ATP-binding site is contributed by 67–74; the sequence is GPESSGKT.

This sequence belongs to the RecA family.

It localises to the cytoplasm. Its function is as follows. Can catalyze the hydrolysis of ATP in the presence of single-stranded DNA, the ATP-dependent uptake of single-stranded DNA by duplex DNA, and the ATP-dependent hybridization of homologous single-stranded DNAs. It interacts with LexA causing its activation and leading to its autocatalytic cleavage. The polypeptide is Protein RecA (Chlamydia trachomatis serovar D (strain ATCC VR-885 / DSM 19411 / UW-3/Cx)).